The following is a 243-amino-acid chain: MENQKEKILVVDDEASIRRILETRLTIIGYEVITASNGEEALLVFRKEYPSLVVLDVMMPKLDGYGVCQELRKESDVPIIMLTALGEVCDRITGLEIGADDYVVKPFSPKELEARIRSVLRRADKITTSLGVPNSGIISIGFLKIDTNKRQVYKNNERVRLTGMEFSLLELLVSKAGEPFSRASILQEVWGYTPERHVDTRVVDVHISRLRAKLEDDPSNPDLILTARGTGYLFQRIIEMNKL.

Residues 7-120 (KILVVDDEAS…ELEARIRSVL (114 aa)) form the Response regulatory domain. Asp-56 is subject to 4-aspartylphosphate. The segment at residues 76–94 (DVPIIMLTALGEVCDRITG) is a DNA-binding region (H-T-H motif). Positions 135–236 (SGIISIGFLK…ARGTGYLFQR (102 aa)) form a DNA-binding region, ompR/PhoB-type.

Its subcellular location is the plastid. It is found in the chloroplast. Functionally, probable promoter-specific protein mediating the interaction between DNA and RNA polymerase. The protein is Probable transcriptional regulator ycf27 (ycf27) of Pyropia yezoensis (Susabi-nori).